Here is a 319-residue protein sequence, read N- to C-terminus: Iron-sulfur cluster transfer protein NUBPL (319 aa).

The transit peptide at 1-38 (MGTWRRLLLFGGVSLRGGGAATVPPRGCRALGCGRQLL) directs the protein to the mitochondrion. Residue 75-82 (GKGGVGKS) participates in ATP binding.

The protein belongs to the Mrp/NBP35 ATP-binding proteins family. It depends on [4Fe-4S] cluster as a cofactor.

The protein resides in the mitochondrion. In terms of biological role, iron-sulfur cluster transfer protein involved in the assembly of the mitochondrial membrane respiratory chain NADH dehydrogenase (Complex I). May deliver one or more Fe-S clusters to complex I subunits. This chain is Iron-sulfur cluster transfer protein NUBPL (Nubpl), found in Mus musculus (Mouse).